The sequence spans 362 residues: Methionine import ATP-binding protein MetN (362 aa).

The region spanning 2–241 (IHIENLSKTY…PRHEVTRAMV (240 aa)) is the ABC transporter domain. 38 to 45 (GPSGAGKS) is a binding site for ATP.

Belongs to the ABC transporter superfamily. Methionine importer (TC 3.A.1.24) family. As to quaternary structure, the complex is composed of two ATP-binding proteins (MetN), two transmembrane proteins (MetI) and a solute-binding protein (MetQ).

It localises to the cell inner membrane. It carries out the reaction L-methionine(out) + ATP + H2O = L-methionine(in) + ADP + phosphate + H(+). It catalyses the reaction D-methionine(out) + ATP + H2O = D-methionine(in) + ADP + phosphate + H(+). In terms of biological role, part of the ABC transporter complex MetNIQ involved in methionine import. Responsible for energy coupling to the transport system. The polypeptide is Methionine import ATP-binding protein MetN (Bordetella bronchiseptica (strain ATCC BAA-588 / NCTC 13252 / RB50) (Alcaligenes bronchisepticus)).